A 143-amino-acid polypeptide reads, in one-letter code: Transcriptional regulator MraZ (143 aa).

SpoVT-AbrB domains follow at residues 5-47 (EYQH…SLEE) and 76-119 (AAEV…DKSK).

The protein belongs to the MraZ family. As to quaternary structure, forms oligomers.

It is found in the cytoplasm. The protein resides in the nucleoid. This chain is Transcriptional regulator MraZ, found in Acetivibrio thermocellus (strain ATCC 27405 / DSM 1237 / JCM 9322 / NBRC 103400 / NCIMB 10682 / NRRL B-4536 / VPI 7372) (Clostridium thermocellum).